Reading from the N-terminus, the 611-residue chain is CRS2-associated factor 2, chloroplastic (611 aa).

Residues 1–58 constitute a chloroplast transit peptide; the sequence is MPPPPPQRPASSHVGRANLFSASPPPLSNRRYPHHRSLPLPPVSPRRRDPKKHSQQPS. Residues 1–72 form a disordered region; the sequence is MPPPPPQRPA…TDSGPTRTVT (72 aa). A compositionally biased stretch (polar residues) spans 55–72; the sequence is QQPSQEEPTDSGPTRTVT. CRM domains lie at 232 to 328 and 350 to 446; these read EPLT…TRPR and DGFT…YSKP. A CRS2 binding region spans residues 486–509; the sequence is KMFKLWKSAVDSSLALLLDDAEAN. The interval 554-578 is disordered; that stretch reads MNDEPETSVAGNEEGQLEQSPDLRD.

As to quaternary structure, interacts with CRS2 and RNA. Part of large ribonucleo-protein complexes that include group IIB introns, CRS2 and CAF2.

The protein localises to the plastid. The protein resides in the chloroplast stroma. Its function is as follows. Required for the splicing of group IIB introns in chloroplasts. Forms splicing particles with CRS2. Interacts with RNA and confers intron specificity of the splicing particles. This is CRS2-associated factor 2, chloroplastic (CAF2) from Zea mays (Maize).